The chain runs to 312 residues: DNA-directed RNA polymerase subunit alpha (312 aa).

Positions Met-1 to Asp-226 are alpha N-terminal domain (alpha-NTD). The interval Asn-243 to Asp-312 is alpha C-terminal domain (alpha-CTD).

Belongs to the RNA polymerase alpha chain family. In terms of assembly, homodimer. The RNAP catalytic core consists of 2 alpha, 1 beta, 1 beta' and 1 omega subunit. When a sigma factor is associated with the core the holoenzyme is formed, which can initiate transcription.

The enzyme catalyses RNA(n) + a ribonucleoside 5'-triphosphate = RNA(n+1) + diphosphate. Its function is as follows. DNA-dependent RNA polymerase catalyzes the transcription of DNA into RNA using the four ribonucleoside triphosphates as substrates. In Lactobacillus johnsonii (strain CNCM I-12250 / La1 / NCC 533), this protein is DNA-directed RNA polymerase subunit alpha.